Reading from the N-terminus, the 100-residue chain is Urease subunit gamma (100 aa).

Belongs to the urease gamma subunit family. As to quaternary structure, heterotrimer of UreA (gamma), UreB (beta) and UreC (alpha) subunits. Three heterotrimers associate to form the active enzyme.

It localises to the cytoplasm. The catalysed reaction is urea + 2 H2O + H(+) = hydrogencarbonate + 2 NH4(+). Its pathway is nitrogen metabolism; urea degradation; CO(2) and NH(3) from urea (urease route): step 1/1. The polypeptide is Urease subunit gamma (Paraburkholderia phymatum (strain DSM 17167 / CIP 108236 / LMG 21445 / STM815) (Burkholderia phymatum)).